The following is a 356-amino-acid chain: A-type ATP synthase subunit C (356 aa).

Belongs to the V-ATPase V0D/AC39 subunit family. As to quaternary structure, has multiple subunits with at least A(3), B(3), C, D, E, F, H, I and proteolipid K(x).

It is found in the cell membrane. Functionally, component of the A-type ATP synthase that produces ATP from ADP in the presence of a proton gradient across the membrane. The chain is A-type ATP synthase subunit C from Thermoplasma volcanium (strain ATCC 51530 / DSM 4299 / JCM 9571 / NBRC 15438 / GSS1).